A 432-amino-acid chain; its full sequence is MNLDSTALAYQSGFGNEFSSEALPGALPVGQNSPQKAPYGLYAELLSGTAFTMARSEARRTWLYRITPSAKHPPFRRLERQIAGAELDAPTPNRLRWDPLALPEQPTDFLDGLLRMAANAPGDKPAGVSIYQYLANRSMERCFYDADGELLLVPQLGRLRLCTELGALQVEPLEIAVIPRGMKFRVELLDGEARGYIAENHGAPLRLPDLGPIGSNGLANPRDFLAPVARYEDSRQPLQLVQKYLGELWACELDHSPLDVVAWHGNNVPYKYDLRRFNTIGTVSFDHPDPSIFTVLTSPTSVHGLANIDFVIFPPRWMVAENTFRPPWFHRNLMNEFMGLIQGAYDAKAGGFVPGGASLHSCMSAHGPDAESCDKAIAADLKPHRIDQTMAFMFETSQVLRPSRAALETPALQNDYDACWASLVSTFNPQRR.

The active-site Proton acceptor is H287. Positions 330 and 336 each coordinate Fe cation. The homogentisate site is built by Y345 and H366. Fe cation is bound at residue H366.

This sequence belongs to the homogentisate dioxygenase family. In terms of assembly, hexamer; dimer of trimers. The cofactor is Fe cation.

It carries out the reaction homogentisate + O2 = 4-maleylacetoacetate + H(+). Its pathway is amino-acid degradation; L-phenylalanine degradation; acetoacetate and fumarate from L-phenylalanine: step 4/6. Involved in the catabolism of homogentisate (2,5-dihydroxyphenylacetate or 2,5-OH-PhAc), a central intermediate in the degradation of phenylalanine and tyrosine. Catalyzes the oxidative ring cleavage of the aromatic ring of homogentisate to yield maleylacetoacetate. The polypeptide is Homogentisate 1,2-dioxygenase (Pseudomonas aeruginosa (strain UCBPP-PA14)).